Here is a 160-residue protein sequence, read N- to C-terminus: Oligoribonuclease (160 aa).

In terms of domain architecture, Exonuclease spans 8-158 (LIWIDLEMTG…YNKLKKKTLI (151 aa)). Residue Tyr129 is part of the active site.

The protein belongs to the oligoribonuclease family.

Its subcellular location is the cytoplasm. In terms of biological role, 3'-to-5' exoribonuclease specific for small oligoribonucleotides. The polypeptide is Oligoribonuclease (orn) (Buchnera aphidicola subsp. Baizongia pistaciae (strain Bp)).